The chain runs to 228 residues: Nucleolar protein 12 (228 aa).

The interval 1–22 (MGKSDRLQQGSKGKGGGKRKHG) is disordered. A coiled-coil region spans residues 40 to 103 (FHKRKLERRR…AITATTECVQ (64 aa)). A compositionally biased stretch (basic and acidic residues) spans 126–145 (LLEPAQRDGGDGEERERTEA). Positions 126–228 (LLEPAQRDGG…QTGRNERSQD (103 aa)) are disordered. Polar residues predominate over residues 158–170 (KIQSLTASLNSLV). The span at 171-180 (KQKKRRKQKR) shows a compositional bias: basic residues. Residues 181–195 (RQEAKQRSHQSDRKS) are compositionally biased toward basic and acidic residues. Over residues 204–220 (NKQKQGKSTKRQRRRQT) the composition is skewed to basic residues.

It belongs to the RRP17 family.

It localises to the nucleus. The protein resides in the nucleolus. Functionally, may bind to rRNA. This Danio rerio (Zebrafish) protein is Nucleolar protein 12 (nol12).